Reading from the N-terminus, the 882-residue chain is HTH-type transcriptional regulator AlkS (882 aa).

51–58 (APPGYGKT) provides a ligand contact to ATP. In terms of domain architecture, HTH luxR-type spans 815-880 (ENKADALLTR…QATIEAERQG (66 aa)). The segment at residues 839–858 (NKQIATNMHVTEDAIKWHMR) is a DNA-binding region (H-T-H motif).

It functions in the pathway hydrocarbon metabolism; alkane degradation. This protein activates the expression of alkBFGHJKL operon in the presence of alkanes. This is HTH-type transcriptional regulator AlkS (alkS) from Ectopseudomonas oleovorans (Pseudomonas oleovorans).